The following is a 323-amino-acid chain: Galectin-4 (323 aa).

Galectin domains follow at residues 19–150 and 194–323; these read YYQP…INFI and YFGR…YVQI. 256–262 contributes to the a beta-D-galactoside binding site; it reads WGSEEKK. At Ser258 the chain carries Phosphoserine.

As to quaternary structure, monomer.

Functionally, galectin that binds lactose and a related range of sugars. May be involved in the assembly of adherens junctions. The chain is Galectin-4 (LGALS4) from Homo sapiens (Human).